Here is a 909-residue protein sequence, read N- to C-terminus: ABC transporter A family member 10 (909 aa).

Transmembrane regions (helical) follow at residues 35-55 (VLVP…LDVV), 320-340 (IASM…FPVI), 374-394 (FLTL…AIGL), 406-426 (FIFY…ASSI), 433-453 (ATVV…FLFG), 465-485 (GILA…YEFA), and 507-527 (LFYL…SIDL). S555 bears the Phosphoserine mark. Residues 587–824 (IVCDNLKKVY…YGGSYVFTMT (238 aa)) form the ABC transporter domain. 625 to 632 (GPNGAGKT) contributes to the ATP binding site.

The protein belongs to the ABC transporter superfamily. ABCA family. CPR flippase (TC 3.A.1.211) subfamily.

The protein localises to the membrane. The protein is ABC transporter A family member 10 (ABCA10) of Arabidopsis thaliana (Mouse-ear cress).